The following is a 994-amino-acid chain: Sarcoplasmic/endoplasmic reticulum calcium ATPase 1 (994 aa).

The Cytoplasmic portion of the chain corresponds to 1–48 (MEQAHTKTTEECLAYFGVNENTGLSLDQVKKNFDKFGPNELPAEEGKS). Residues 49–69 (LWELVAEQFEDLLVRILLLAA) traverse the membrane as a helical segment. Over 70-89 (IISFVLAWFEEGEETVTAFV) the chain is Lumenal. A helical transmembrane segment spans residues 90–110 (EPFVILLILIANAVVGVWQER). Over 111–253 (NAEDAIEALK…QEKTPLQQKL (143 aa)) the chain is Cytoplasmic. A helical transmembrane segment spans residues 254 to 273 (DEFGEQLSKVISLICVAVWL). At 274-295 (INIGHFNDPIHGGSWIKGAIYY) the chain is on the lumenal side. Residues 296–313 (FKIAVALAVAAIPEGLPA) traverse the membrane as a helical segment. Residues Val304, Ala305, Ile307, and Glu309 each contribute to the Ca(2+) site. Over 314 to 757 (VITTCLALGT…EEGRAIYNNM (444 aa)) the chain is Cytoplasmic. Asp351 acts as the 4-aspartylphosphate intermediate in catalysis. Positions 351 and 353 each coordinate Mg(2+). Residues Thr353, Glu442, Arg489, Lys515, Arg560, Thr625, Gly626, Asp627, Arg678, and Lys684 each coordinate ATP. Asp703 serves as a coordination point for Mg(2+). Asn706 contributes to the ATP binding site. A helical transmembrane segment spans residues 758–777 (KQFIRYLISSNVGEVVCIFL). Ca(2+)-binding residues include Asn768 and Glu771. Topologically, residues 778 to 787 (TAALGLPEAL) are lumenal. Residues 788-808 (IPVQLLWVNLVTDGLPATALG) form a helical membrane-spanning segment. Residues 788–808 (IPVQLLWVNLVTDGLPATALG) form an interaction with PLN region. Ca(2+)-binding residues include Asn796, Thr799, and Asp800. Topologically, residues 809–828 (FNPPDLDIMDRPPRSPKEPL) are cytoplasmic. Residues 829–851 (ISGWLFFRYMAIGGYVGAATVGA) form a helical membrane-spanning segment. Over 852–897 (AAWWFMYADDGPNVTFYQLSHFMQCTEDNPDFEGHECEIFESPVPM) the chain is Lumenal. Cys876 and Cys888 form a disulfide bridge. Residues 898–917 (TMALSVLVTIEMCNALNSLS) form a helical membrane-spanning segment. Glu908 is a binding site for Ca(2+). The Cytoplasmic portion of the chain corresponds to 918–930 (ENQSLIRMPPWSN). Residues 931–949 (FWLLGSICLSMSLHFLILY) form a helical membrane-spanning segment. The interaction with PLN stretch occupies residues 932 to 943 (WLLGSICLSMSL). The Lumenal segment spans residues 950–964 (VEPLPMIFKLTPLNV). The helical transmembrane segment at 965 to 985 (EQWFIVLKMSFPVILLDELLK) threads the bilayer. At 986–994 (FVARNYLEG) the chain is on the cytoplasmic side.

It belongs to the cation transport ATPase (P-type) (TC 3.A.3) family. Type IIA subfamily. Interacts with sarcolipin (SLN). Interacts with phospholamban (PLN). Interacts with myoregulin (MRLN). Interacts with DWORF. Interacts with VMP1. Mg(2+) is required as a cofactor.

It localises to the endoplasmic reticulum membrane. The protein localises to the sarcoplasmic reticulum membrane. It catalyses the reaction Ca(2+)(in) + ATP + H2O = Ca(2+)(out) + ADP + phosphate + H(+). Its activity is regulated as follows. Inhibited by sarcolipin (SLN) and myoregulin (MRLN). Also shown to be inhibited by phospholamban (PLN) in vitro. Enhanced by DWORF; DWORF increases activity by displacing sarcolipin (SLN), phospholamban (PLN) and myoregulin (MRLN). Functionally, key regulator of striated muscle performance by acting as the major Ca(2+) ATPase responsible for the reuptake of cytosolic Ca(2+) into the sarcoplasmic reticulum. Catalyzes the hydrolysis of ATP coupled with the translocation of calcium from the cytosol to the sarcoplasmic reticulum lumen. Contributes to calcium sequestration involved in muscular excitation/contraction. The polypeptide is Sarcoplasmic/endoplasmic reticulum calcium ATPase 1 (ATP2A1) (Pelophylax lessonae (Pool frog)).